Consider the following 283-residue polypeptide: MLKLNKINEVKKYVDEWKKEGLTIGLVPTMGCLHEGHKSLIDRAVKENDKVIVSVFVNPTQFGPNEDFDKYPRSIENDVDLCNKAGVSIVFNPDPKEMYFHDACTYVNVENLTDGLCGAKREGHFRGVCTVVSKLFNISQATRAYFGQKDAQQLAVIKRMVRDLNFNVEIVGCPIVRESDGLAKSSRNKYLSKEERVEALVLSRGLRKGKELLYGGIRKTSKIKETIENEIKKSHLGKIDYIEVVDSITLEPVENIERDVLVAIAVFIGKTRLIDNFIFKLGE.

Position 30-37 (30-37 (MGCLHEGH)) interacts with ATP. The active-site Proton donor is H37. A (R)-pantoate-binding site is contributed by Q61. Q61 provides a ligand contact to beta-alanine. ATP is bound at residue 147-150 (GQKD). Q153 serves as a coordination point for (R)-pantoate. Residues V176 and 184–187 (KSSR) contribute to the ATP site.

Belongs to the pantothenate synthetase family. In terms of assembly, homodimer.

Its subcellular location is the cytoplasm. It catalyses the reaction (R)-pantoate + beta-alanine + ATP = (R)-pantothenate + AMP + diphosphate + H(+). The protein operates within cofactor biosynthesis; (R)-pantothenate biosynthesis; (R)-pantothenate from (R)-pantoate and beta-alanine: step 1/1. Catalyzes the condensation of pantoate with beta-alanine in an ATP-dependent reaction via a pantoyl-adenylate intermediate. The polypeptide is Pantothenate synthetase (Clostridium novyi (strain NT)).